An 838-amino-acid chain; its full sequence is Leucine--tRNA ligase 1 (838 aa).

The 'HIGH' region signature appears at 40-51; the sequence is PYPSGAGLHVGH. The short motif at 608 to 612 is the 'KMSKS' region element; it reads KMSKS. Lysine 611 is a binding site for ATP.

This sequence belongs to the class-I aminoacyl-tRNA synthetase family.

The protein localises to the cytoplasm. The catalysed reaction is tRNA(Leu) + L-leucine + ATP = L-leucyl-tRNA(Leu) + AMP + diphosphate. This Rhizobium johnstonii (strain DSM 114642 / LMG 32736 / 3841) (Rhizobium leguminosarum bv. viciae) protein is Leucine--tRNA ligase 1.